A 578-amino-acid polypeptide reads, in one-letter code: CTP synthase (578 aa).

The 255-residue stretch at 305-559 (KIALVGKYTN…LGLVAASSGI (255 aa)) folds into the Glutamine amidotransferase type-1 domain. Catalysis depends on for GATase activity residues Cys-404, His-535, and Glu-537.

It belongs to the CTP synthase family.

The catalysed reaction is UTP + L-glutamine + ATP + H2O = CTP + L-glutamate + ADP + phosphate + 2 H(+). It participates in pyrimidine metabolism; CTP biosynthesis via de novo pathway; CTP from UDP: step 2/2. In terms of biological role, catalyzes the ATP-dependent amination of UTP to CTP with either L-glutamine or ammonia as the source of nitrogen. In Candida glabrata (strain ATCC 2001 / BCRC 20586 / JCM 3761 / NBRC 0622 / NRRL Y-65 / CBS 138) (Yeast), this protein is CTP synthase (URA7).